We begin with the raw amino-acid sequence, 571 residues long: Proline--tRNA ligase (571 aa).

This sequence belongs to the class-II aminoacyl-tRNA synthetase family. ProS type 1 subfamily. Homodimer.

The protein localises to the cytoplasm. It carries out the reaction tRNA(Pro) + L-proline + ATP = L-prolyl-tRNA(Pro) + AMP + diphosphate. Its function is as follows. Catalyzes the attachment of proline to tRNA(Pro) in a two-step reaction: proline is first activated by ATP to form Pro-AMP and then transferred to the acceptor end of tRNA(Pro). As ProRS can inadvertently accommodate and process non-cognate amino acids such as alanine and cysteine, to avoid such errors it has two additional distinct editing activities against alanine. One activity is designated as 'pretransfer' editing and involves the tRNA(Pro)-independent hydrolysis of activated Ala-AMP. The other activity is designated 'posttransfer' editing and involves deacylation of mischarged Ala-tRNA(Pro). The misacylated Cys-tRNA(Pro) is not edited by ProRS. The chain is Proline--tRNA ligase from Vibrio cholerae serotype O1 (strain ATCC 39541 / Classical Ogawa 395 / O395).